The following is a 154-amino-acid chain: Endoribonuclease YbeY (154 aa).

His-113, His-117, and His-123 together coordinate Zn(2+).

This sequence belongs to the endoribonuclease YbeY family. It depends on Zn(2+) as a cofactor.

Its subcellular location is the cytoplasm. Single strand-specific metallo-endoribonuclease involved in late-stage 70S ribosome quality control and in maturation of the 3' terminus of the 16S rRNA. This Aeromonas hydrophila subsp. hydrophila (strain ATCC 7966 / DSM 30187 / BCRC 13018 / CCUG 14551 / JCM 1027 / KCTC 2358 / NCIMB 9240 / NCTC 8049) protein is Endoribonuclease YbeY.